A 132-amino-acid chain; its full sequence is S-protein homolog 19 (132 aa).

An N-terminal signal peptide occupies residues Met1 to Ala26. Asn87 carries an N-linked (GlcNAc...) asparagine glycan.

It belongs to the plant self-incompatibility (S1) protein family.

It localises to the secreted. The polypeptide is S-protein homolog 19 (Arabidopsis thaliana (Mouse-ear cress)).